A 962-amino-acid polypeptide reads, in one-letter code: Putative RNA Helicase B962L (962 aa).

Positions 43 to 229 constitute a Helicase ATP-binding domain; that stretch reads IPTSLADRVL…FGIGKENIIL (187 aa). 56–63 contacts ATP; sequence SRTGSGKS. Positions 167 to 170 match the DEAH box motif; that stretch reads DEAH. Positions 253 to 459 constitute a Helicase C-terminal domain; it reads ACETALTIHK…TIKKNKEGVF (207 aa). Residues 521-541 form a helical membrane-spanning segment; that stretch reads GYFWQAAISDIATILAVVSVA.

It belongs to the DEAD box helicase family. DEAH subfamily.

The protein localises to the host membrane. Its subcellular location is the virion. The enzyme catalyses ATP + H2O = ADP + phosphate + H(+). This is Putative RNA Helicase B962L from African swine fever virus (isolate Warthog/Namibia/Wart80/1980) (ASFV).